The sequence spans 397 residues: Tryptophan synthase beta chain (397 aa).

Lys87 bears the N6-(pyridoxal phosphate)lysine mark.

Belongs to the TrpB family. In terms of assembly, tetramer of two alpha and two beta chains. It depends on pyridoxal 5'-phosphate as a cofactor.

The enzyme catalyses (1S,2R)-1-C-(indol-3-yl)glycerol 3-phosphate + L-serine = D-glyceraldehyde 3-phosphate + L-tryptophan + H2O. It participates in amino-acid biosynthesis; L-tryptophan biosynthesis; L-tryptophan from chorismate: step 5/5. In terms of biological role, the beta subunit is responsible for the synthesis of L-tryptophan from indole and L-serine. The polypeptide is Tryptophan synthase beta chain (Cronobacter sakazakii (strain ATCC BAA-894) (Enterobacter sakazakii)).